The primary structure comprises 223 residues: N-acetylmuramic acid 6-phosphate phosphatase (223 aa).

Asp9 (nucleophile) is an active-site residue. 3 residues coordinate Mg(2+): Asp9, Asp11, and Asp168. Asp11 (proton donor) is an active-site residue.

Belongs to the HAD-like hydrolase superfamily. CbbY/CbbZ/Gph/YieH family. Phosphatase MupP subfamily. Mg(2+) serves as cofactor.

The catalysed reaction is N-acetyl-D-muramate 6-phosphate + H2O = N-acetyl-D-muramate + phosphate. It participates in cell wall biogenesis; peptidoglycan recycling. Functionally, specifically catalyzes the dephosphorylation of N-acetylmuramate 6-phosphate (MurNAc-6P) to MurNac. Is involved in peptidoglycan recycling as part of a cell wall recycling pathway that bypasses de novo biosynthesis of the peptidoglycan precursor UDP-MurNAc. Plays a role in intrinsic resistance to fosfomycin, which targets the de novo synthesis of UDP-MurNAc. Shows a very low activity on GlcNAc-6P, and neither alpha-1-phosphorylated MurNAc, GlcNAc, or glucose nor glucosamine-6P or glucose-6P can be used as a substrate. The sequence is that of N-acetylmuramic acid 6-phosphate phosphatase from Pseudomonas putida (strain ATCC 47054 / DSM 6125 / CFBP 8728 / NCIMB 11950 / KT2440).